The following is a 435-amino-acid chain: MYYQIVSFSHKNCEQSMREKLAFPNDEEKATFLEQLTGFEFVHEAFIISTCNRVEIVMATRDNFSSYHAVLGLMSQKGGLNFYELKSTAKRYDDEEAIEHIFSVVSSLDSLVIGESQITGQVKEAFRFSFQHGTAGRRLNRVLSYAVKCAAEVRNATNISQNPISIASVAVAQAHKLLGDNIQGMKGIVVGAGDMGVLAAKHLLRVGCDVVLIGRDLDKVQTVADSLGEDVKADTMENLTKYINRYRLLFSATSSPEPVITGDLIENETLPRQWFDMAIPRDIEDMELEKLQLFRIDDLRAISNDNHAMREEQAVRANEIVERYTEEFYAWLKALSIEPVIKQMRQHVSAAIEKEMQRALKKGFVPKEYESNMRKMAEQMFNRFLHDPTQNLRASSTESKNTNCIESVKKMFNIDTEHVDFKQYKNDHHTKGYSA.

Substrate-binding positions include 50 to 53 (TCNR), Ser110, 115 to 117 (ESQ), and Gln121. Residue Cys51 is the Nucleophile of the active site. 191 to 196 (GAGDMG) contacts NADP(+).

Belongs to the glutamyl-tRNA reductase family. Homodimer.

It catalyses the reaction (S)-4-amino-5-oxopentanoate + tRNA(Glu) + NADP(+) = L-glutamyl-tRNA(Glu) + NADPH + H(+). It participates in porphyrin-containing compound metabolism; protoporphyrin-IX biosynthesis; 5-aminolevulinate from L-glutamyl-tRNA(Glu): step 1/2. Catalyzes the NADPH-dependent reduction of glutamyl-tRNA(Glu) to glutamate 1-semialdehyde (GSA). The polypeptide is Glutamyl-tRNA reductase (Sulfurovum sp. (strain NBC37-1)).